The chain runs to 250 residues: Homeobox protein Dlx4a (250 aa).

The homeobox DNA-binding region spans 123-182; it reads IRKPRTIYSSLQLQALNQRFQQTQYLALPERADLAAKLGLTQTQVKIWFQNKRSKYKKIM. The segment at 182-202 is disordered; the sequence is MKHGSSGPEGEHLQAASASGA.

It belongs to the distal-less homeobox family.

It is found in the nucleus. The sequence is that of Homeobox protein Dlx4a (dlx4a) from Danio rerio (Zebrafish).